The following is a 666-amino-acid chain: Chaperone protein HtpG (666 aa).

Positions 1 to 374 are a; substrate-binding; sequence MSELNPVDNQ…SADLPLNVSR (374 aa). The b stretch occupies residues 375-593; sequence ELLQESRDVK…EGELSPQMIQ (219 aa). The tract at residues 594–666 is c; sequence MLKQMGQDVP…LRRVNELLMR (73 aa).

Belongs to the heat shock protein 90 family. Homodimer.

It is found in the cytoplasm. Molecular chaperone. Has ATPase activity. The chain is Chaperone protein HtpG from Psychrobacter cryohalolentis (strain ATCC BAA-1226 / DSM 17306 / VKM B-2378 / K5).